We begin with the raw amino-acid sequence, 152 residues long: Deoxyuridine 5'-triphosphate nucleotidohydrolase (152 aa).

Substrate-binding positions include 71-73, Asn-84, 88-90, and Met-98; these read RSG and LID.

The protein belongs to the dUTPase family. Mg(2+) serves as cofactor.

It carries out the reaction dUTP + H2O = dUMP + diphosphate + H(+). It participates in pyrimidine metabolism; dUMP biosynthesis; dUMP from dCTP (dUTP route): step 2/2. In terms of biological role, this enzyme is involved in nucleotide metabolism: it produces dUMP, the immediate precursor of thymidine nucleotides and it decreases the intracellular concentration of dUTP so that uracil cannot be incorporated into DNA. This chain is Deoxyuridine 5'-triphosphate nucleotidohydrolase, found in Shewanella loihica (strain ATCC BAA-1088 / PV-4).